The chain runs to 86 residues: MTIELRKIAILPIRFYQRFISPLFPPSCRFVPTCSAYAAEAVLRHGIIKGGFLALRRILRCNPLCAGGYDPVPESRHQDAKRVRSC.

This sequence belongs to the UPF0161 family.

Its subcellular location is the cell inner membrane. In terms of biological role, could be involved in insertion of integral membrane proteins into the membrane. This chain is Putative membrane protein insertion efficiency factor, found in Oleidesulfovibrio alaskensis (strain ATCC BAA-1058 / DSM 17464 / G20) (Desulfovibrio alaskensis).